Reading from the N-terminus, the 149-residue chain is Ribosomal RNA large subunit methyltransferase H (149 aa).

S-adenosyl-L-methionine contacts are provided by residues Leu71, Gly98, and 117 to 122; that span reads LSKLTL.

This sequence belongs to the RNA methyltransferase RlmH family. As to quaternary structure, homodimer.

The protein localises to the cytoplasm. It carries out the reaction pseudouridine(1915) in 23S rRNA + S-adenosyl-L-methionine = N(3)-methylpseudouridine(1915) in 23S rRNA + S-adenosyl-L-homocysteine + H(+). Its function is as follows. Specifically methylates the pseudouridine at position 1915 (m3Psi1915) in 23S rRNA. The chain is Ribosomal RNA large subunit methyltransferase H from Campylobacter jejuni subsp. doylei (strain ATCC BAA-1458 / RM4099 / 269.97).